The chain runs to 495 residues: Aspartyl/glutamyl-tRNA(Asn/Gln) amidotransferase subunit B (495 aa).

It belongs to the GatB/GatE family. GatB subfamily. As to quaternary structure, heterotrimer of A, B and C subunits.

It catalyses the reaction L-glutamyl-tRNA(Gln) + L-glutamine + ATP + H2O = L-glutaminyl-tRNA(Gln) + L-glutamate + ADP + phosphate + H(+). The enzyme catalyses L-aspartyl-tRNA(Asn) + L-glutamine + ATP + H2O = L-asparaginyl-tRNA(Asn) + L-glutamate + ADP + phosphate + 2 H(+). In terms of biological role, allows the formation of correctly charged Asn-tRNA(Asn) or Gln-tRNA(Gln) through the transamidation of misacylated Asp-tRNA(Asn) or Glu-tRNA(Gln) in organisms which lack either or both of asparaginyl-tRNA or glutaminyl-tRNA synthetases. The reaction takes place in the presence of glutamine and ATP through an activated phospho-Asp-tRNA(Asn) or phospho-Glu-tRNA(Gln). The sequence is that of Aspartyl/glutamyl-tRNA(Asn/Gln) amidotransferase subunit B from Halobacterium salinarum (strain ATCC 700922 / JCM 11081 / NRC-1) (Halobacterium halobium).